The following is a 125-amino-acid chain: Large ribosomal subunit protein bL12 (125 aa).

Belongs to the bacterial ribosomal protein bL12 family. In terms of assembly, homodimer. Part of the ribosomal stalk of the 50S ribosomal subunit. Forms a multimeric L10(L12)X complex, where L10 forms an elongated spine to which 2 to 4 L12 dimers bind in a sequential fashion. Binds GTP-bound translation factors.

In terms of biological role, forms part of the ribosomal stalk which helps the ribosome interact with GTP-bound translation factors. Is thus essential for accurate translation. In Chlorobium phaeobacteroides (strain DSM 266 / SMG 266 / 2430), this protein is Large ribosomal subunit protein bL12.